Consider the following 407-residue polypeptide: Na(+)-translocating NADH-quinone reductase subunit F (407 aa).

A helical membrane pass occupies residues 6-26 (IFLAIGMFTAIVLGLVAIILV). The 2Fe-2S ferredoxin-type domain occupies 35-127 (GDVTIQINGE…DMQIRVPEEV (93 aa)). [2Fe-2S] cluster is bound by residues cysteine 70, cysteine 76, cysteine 79, and cysteine 111. The region spanning 130–269 (VKKWECTVES…YGPFGEFFAK (140 aa)) is the FAD-binding FR-type domain.

The protein belongs to the NqrF family. Composed of six subunits; NqrA, NqrB, NqrC, NqrD, NqrE and NqrF. Requires [2Fe-2S] cluster as cofactor. It depends on FAD as a cofactor.

The protein localises to the cell inner membrane. It carries out the reaction a ubiquinone + n Na(+)(in) + NADH + H(+) = a ubiquinol + n Na(+)(out) + NAD(+). NQR complex catalyzes the reduction of ubiquinone-1 to ubiquinol by two successive reactions, coupled with the transport of Na(+) ions from the cytoplasm to the periplasm. The first step is catalyzed by NqrF, which accepts electrons from NADH and reduces ubiquinone-1 to ubisemiquinone by a one-electron transfer pathway. This Pseudomonas paraeruginosa (strain DSM 24068 / PA7) (Pseudomonas aeruginosa (strain PA7)) protein is Na(+)-translocating NADH-quinone reductase subunit F.